The chain runs to 500 residues: Pyoverdin chromophore biosynthetic protein PvcC (500 aa).

The cofactor is FAD.

It participates in siderophore biosynthesis; pyoverdin biosynthesis. The sequence is that of Pyoverdin chromophore biosynthetic protein PvcC (pvcC) from Pseudomonas aeruginosa (strain ATCC 15692 / DSM 22644 / CIP 104116 / JCM 14847 / LMG 12228 / 1C / PRS 101 / PAO1).